The primary structure comprises 225 residues: Glutathione S-transferase zeta class (225 aa).

Positions proline 10–proline 91 constitute a GST N-terminal domain. Residues serine 20 to arginine 25, glutamine 49, valine 63, aspartate 75 to serine 76, glutamine 115, and asparagine 119 to alanine 121 each bind glutathione. One can recognise a GST C-terminal domain in the interval aspartate 96–serine 221.

Belongs to the GST superfamily. Zeta family.

It is found in the cytoplasm. The catalysed reaction is RX + glutathione = an S-substituted glutathione + a halide anion + H(+). This Euphorbia esula (Leafy spurge) protein is Glutathione S-transferase zeta class.